Consider the following 119-residue polypeptide: Ribonuclease P protein component (119 aa).

Belongs to the RnpA family. Consists of a catalytic RNA component (M1 or rnpB) and a protein subunit.

It carries out the reaction Endonucleolytic cleavage of RNA, removing 5'-extranucleotides from tRNA precursor.. Its function is as follows. RNaseP catalyzes the removal of the 5'-leader sequence from pre-tRNA to produce the mature 5'-terminus. It can also cleave other RNA substrates such as 4.5S RNA. The protein component plays an auxiliary but essential role in vivo by binding to the 5'-leader sequence and broadening the substrate specificity of the ribozyme. The protein is Ribonuclease P protein component of Klebsiella pneumoniae (strain 342).